A 143-amino-acid polypeptide reads, in one-letter code: Ayaconin (143 aa).

The signal sequence occupies residues 1–22 (MSFLFFLVVLISIGLWVGPCVA).

As to quaternary structure, interacts with human F12 (inactive). Salivary gland.

Its subcellular location is the secreted. Functionally, inhibits the intrinsic blood coagulation pathway in the host by blocking activation of host coagulation factor XII (F12). In Lutzomyia ayacuchensis (Sand fly), this protein is Ayaconin.